The following is a 163-amino-acid chain: 3-isopropylmalate dehydratase small subunit 2 (163 aa).

This sequence belongs to the LeuD family. LeuD type 2 subfamily. In terms of assembly, heterodimer of LeuC and LeuD.

It carries out the reaction (2R,3S)-3-isopropylmalate = (2S)-2-isopropylmalate. The protein operates within amino-acid biosynthesis; L-leucine biosynthesis; L-leucine from 3-methyl-2-oxobutanoate: step 2/4. Catalyzes the isomerization between 2-isopropylmalate and 3-isopropylmalate, via the formation of 2-isopropylmaleate. The protein is 3-isopropylmalate dehydratase small subunit 2 (leuD2) of Pyrococcus abyssi (strain GE5 / Orsay).